Reading from the N-terminus, the 727-residue chain is Zinc metalloproteinase nas-38 (727 aa).

Positions 1-25 are cleaved as a signal peptide; it reads MPSPSYNRHIIIASCFCCLLIFSSA. Residues 26 to 114 constitute a propeptide that is removed on maturation; the sequence is ARVPKASKKH…FTQGKREKRK (89 aa). Residues 113–312 form the Peptidase M12A domain; it reads RKIGRNPLYK…QAINMAYGCT (200 aa). Cystine bridges form between cysteine 158–cysteine 311 and cysteine 179–cysteine 199. Residue histidine 207 coordinates Zn(2+). Glutamate 208 is a catalytic residue. Histidine 211 and histidine 217 together coordinate Zn(2+). One can recognise an EGF-like domain in the interval 306–345; that stretch reads NMAYGCTESCADLPCLRNGYTHPNNCSMCACPEGLSGRYC. N-linked (GlcNAc...) asparagine glycosylation occurs at asparagine 330. Residues 353–469 enclose the CUB domain; sequence AQCGGVIFAT…AGFKAKFWSN (117 aa). 2 cysteine pairs are disulfide-bonded: cysteine 355-cysteine 383 and cysteine 411-cysteine 432. Disordered regions lie at residues 473–506 and 532–561; these read PEGV…QSTT and TPLT…TEPS. Over residues 535–554 the composition is skewed to low complexity; the sequence is TSSSTTTESTTVSSTTQSTT. Residues 610–658 enclose the TSP type-1 domain; sequence ECGCGAWSEWQGECSQQCGGCGHRLRKRECKKEACRKEEKRPCNFSACP. 4 disulfide bridges follow: cysteine 611-cysteine 644, cysteine 623-cysteine 652, cysteine 627-cysteine 657, and cysteine 639-cysteine 644. 2 N-linked (GlcNAc...) asparagine glycosylation sites follow: asparagine 653 and asparagine 714.

Zn(2+) is required as a cofactor. Expressed in the epidermis, the excretory canal cell, duct cell, pore cell, and excretory gland cell. Expressed in an oscillating pattern in epithelial cells with increased expression during the lethargus phase which occurs during molting between larval and adult stages. Not expressed in seam cells or in the RIS neuron.

The protein resides in the secreted. In terms of biological role, metalloprotease. As part of the innate immune response to molting and injury to the adult epidermis, positively regulates the activity of the transcription factor sta-2 to promote the expression of epidermal antimicrobial peptides such as nlp-29. Through regulating the expression of epidermal antimicrobial peptides such as nlp-29, modulates sleep duration and locomotion quiescence during the sleep-like state called lethargus which occurs during molting between larval and adult stages. This may occur through the sleep-active RIS neuron. This Caenorhabditis elegans protein is Zinc metalloproteinase nas-38.